Reading from the N-terminus, the 410-residue chain is Argininosuccinate synthase (410 aa).

ATP is bound at residue Ala8–Ser16. Tyr86 is a binding site for L-citrulline. Position 116 (Gly116) interacts with ATP. Thr118, Asn122, and Asp123 together coordinate L-aspartate. Asn122 serves as a coordination point for L-citrulline. L-citrulline is bound by residues Arg126, Ser174, Glu259, and Tyr271.

Belongs to the argininosuccinate synthase family. Type 1 subfamily. Homotetramer.

It is found in the cytoplasm. It catalyses the reaction L-citrulline + L-aspartate + ATP = 2-(N(omega)-L-arginino)succinate + AMP + diphosphate + H(+). The protein operates within amino-acid biosynthesis; L-arginine biosynthesis; L-arginine from L-ornithine and carbamoyl phosphate: step 2/3. The protein is Argininosuccinate synthase of Leuconostoc citreum (strain KM20).